A 394-amino-acid chain; its full sequence is Elongation factor Tu (394 aa).

One can recognise a tr-type G domain in the interval 10 to 204 (KPHVNVGTIG…HLDSYIPEPE (195 aa)). The segment at 19-26 (GHVDHGKT) is G1. GTP is bound at residue 19 to 26 (GHVDHGKT). T26 lines the Mg(2+) pocket. The segment at 60–64 (GITIN) is G2. The tract at residues 81-84 (DCPG) is G3. Residues 81–85 (DCPGH) and 136–139 (NKCD) each bind GTP. Residues 136 to 139 (NKCD) form a G4 region. Residues 174–176 (SAL) form a G5 region.

Belongs to the TRAFAC class translation factor GTPase superfamily. Classic translation factor GTPase family. EF-Tu/EF-1A subfamily. In terms of assembly, monomer.

The protein resides in the cytoplasm. The catalysed reaction is GTP + H2O = GDP + phosphate + H(+). GTP hydrolase that promotes the GTP-dependent binding of aminoacyl-tRNA to the A-site of ribosomes during protein biosynthesis. This chain is Elongation factor Tu, found in Haemophilus ducreyi (strain 35000HP / ATCC 700724).